Reading from the N-terminus, the 1010-residue chain is Glycine--tRNA ligase (1010 aa).

The tract at residues 1–312 (MSEHPLTLQS…TSESVVPMIS (312 aa)) is glycine--tRNA ligase alpha subunit. Residues 313–1010 (STEDLLLEIG…SLCHWESVAV (698 aa)) are glycine--tRNA ligase beta subunit.

The protein belongs to the class-II aminoacyl-tRNA synthetase family.

Its subcellular location is the cytoplasm. It carries out the reaction tRNA(Gly) + glycine + ATP = glycyl-tRNA(Gly) + AMP + diphosphate. This Chlamydia pneumoniae (Chlamydophila pneumoniae) protein is Glycine--tRNA ligase (glyQS).